The chain runs to 396 residues: Acetate kinase (396 aa).

Asparagine 7 lines the Mg(2+) pocket. Lysine 14 serves as a coordination point for ATP. Residue arginine 88 coordinates substrate. Aspartate 145 (proton donor/acceptor) is an active-site residue. ATP is bound by residues 205-209 (HLGNG), 279-281 (DFR), and 327-331 (GIGEN). A Mg(2+)-binding site is contributed by glutamate 381.

Belongs to the acetokinase family. As to quaternary structure, homodimer. It depends on Mg(2+) as a cofactor. Requires Mn(2+) as cofactor.

Its subcellular location is the cytoplasm. The catalysed reaction is acetate + ATP = acetyl phosphate + ADP. The protein operates within metabolic intermediate biosynthesis; acetyl-CoA biosynthesis; acetyl-CoA from acetate: step 1/2. Catalyzes the formation of acetyl phosphate from acetate and ATP. Can also catalyze the reverse reaction. In Campylobacter jejuni subsp. jejuni serotype O:2 (strain ATCC 700819 / NCTC 11168), this protein is Acetate kinase.